The sequence spans 186 residues: Ribosome-recycling factor (186 aa).

It belongs to the RRF family.

The protein resides in the cytoplasm. Its function is as follows. Responsible for the release of ribosomes from messenger RNA at the termination of protein biosynthesis. May increase the efficiency of translation by recycling ribosomes from one round of translation to another. The chain is Ribosome-recycling factor from Chlorobaculum parvum (strain DSM 263 / NCIMB 8327) (Chlorobium vibrioforme subsp. thiosulfatophilum).